A 359-amino-acid chain; its full sequence is MSVSVLIVDDSAVVREVLSQMLSSAPDIEVLGAAPDPIFAMTRMKQRWPDVIVLDIEMPRMDGLTFLRKIMDERPTPVIICSSLTEKGARITLDALAAGAVAIITKPALNQRAFLLEAAKELVQEVRDAARAKMGVVKRISQGAAEHAPPAPKLTADVVLEAPSGLEKYRTTEKIIAIGTSTGGTQALEYLLPKLPATCPGVAVVQHMPEKFTASFAERLNRLCRVEVKEAQTGDRLISGVALIAPGGKHLLVKRNGAQYVADVKDGPLVSRHRPSVDVLFRSVAVCAGGNAIGVIMTGMGDDGARGMREMHDAGARTVAQDEESCVVFGMPAEAINHGGVDEVMSLERIAHMLAGIRG.

The 118-residue stretch at 4 to 121 folds into the Response regulatory domain; it reads SVLIVDDSAV…RAFLLEAAKE (118 aa). Residue Asp55 is modified to 4-aspartylphosphate. The region spanning 169-354 is the CheB-type methylesterase domain; the sequence is YRTTEKIIAI…MSLERIAHML (186 aa). Active-site residues include Ser181, His207, and Asp303.

Belongs to the CheB family. Phosphorylated by CheA. Phosphorylation of the N-terminal regulatory domain activates the methylesterase activity.

It is found in the cytoplasm. The enzyme catalyses [protein]-L-glutamate 5-O-methyl ester + H2O = L-glutamyl-[protein] + methanol + H(+). It carries out the reaction L-glutaminyl-[protein] + H2O = L-glutamyl-[protein] + NH4(+). Functionally, involved in chemotaxis. Part of a chemotaxis signal transduction system that modulates chemotaxis in response to various stimuli. Catalyzes the demethylation of specific methylglutamate residues introduced into the chemoreceptors (methyl-accepting chemotaxis proteins or MCP) by CheR. Also mediates the irreversible deamidation of specific glutamine residues to glutamic acid. This Chromobacterium violaceum (strain ATCC 12472 / DSM 30191 / JCM 1249 / CCUG 213 / NBRC 12614 / NCIMB 9131 / NCTC 9757 / MK) protein is Protein-glutamate methylesterase/protein-glutamine glutaminase 1.